The sequence spans 314 residues: Ribosomal RNA small subunit methyltransferase H (314 aa).

S-adenosyl-L-methionine is bound by residues 35-37 (GGH), D55, F79, D101, and Q108.

The protein belongs to the methyltransferase superfamily. RsmH family.

Its subcellular location is the cytoplasm. It carries out the reaction cytidine(1402) in 16S rRNA + S-adenosyl-L-methionine = N(4)-methylcytidine(1402) in 16S rRNA + S-adenosyl-L-homocysteine + H(+). Functionally, specifically methylates the N4 position of cytidine in position 1402 (C1402) of 16S rRNA. This Pectobacterium carotovorum subsp. carotovorum (strain PC1) protein is Ribosomal RNA small subunit methyltransferase H.